Consider the following 82-residue polypeptide: DNA-directed RNA polymerase subunit Rpo5 (82 aa).

It belongs to the archaeal Rpo5/eukaryotic RPB5 RNA polymerase subunit family. As to quaternary structure, part of the RNA polymerase complex.

Its subcellular location is the cytoplasm. The enzyme catalyses RNA(n) + a ribonucleoside 5'-triphosphate = RNA(n+1) + diphosphate. Its function is as follows. DNA-dependent RNA polymerase (RNAP) catalyzes the transcription of DNA into RNA using the four ribonucleoside triphosphates as substrates. The polypeptide is DNA-directed RNA polymerase subunit Rpo5 (Pyrococcus horikoshii (strain ATCC 700860 / DSM 12428 / JCM 9974 / NBRC 100139 / OT-3)).